Reading from the N-terminus, the 159-residue chain is NADH-quinone oxidoreductase subunit B (159 aa).

[4Fe-4S] cluster-binding residues include Cys-32, Cys-33, Cys-97, and Cys-126.

The protein belongs to the complex I 20 kDa subunit family. As to quaternary structure, NDH-1 is composed of 14 different subunits. Subunits NuoB, C, D, E, F, and G constitute the peripheral sector of the complex. The cofactor is [4Fe-4S] cluster.

The protein resides in the cell inner membrane. The catalysed reaction is a quinone + NADH + 5 H(+)(in) = a quinol + NAD(+) + 4 H(+)(out). NDH-1 shuttles electrons from NADH, via FMN and iron-sulfur (Fe-S) centers, to quinones in the respiratory chain. The immediate electron acceptor for the enzyme in this species is believed to be ubiquinone. Couples the redox reaction to proton translocation (for every two electrons transferred, four hydrogen ions are translocated across the cytoplasmic membrane), and thus conserves the redox energy in a proton gradient. The sequence is that of NADH-quinone oxidoreductase subunit B from Helicobacter pylori (strain J99 / ATCC 700824) (Campylobacter pylori J99).